We begin with the raw amino-acid sequence, 310 residues long: GPN-loop GTPase 2 (310 aa).

A2 is subject to N-acetylalanine. 19 to 24 (GSGKTT) contributes to the GTP binding site. The short motif at 76-78 (GPN) is the Gly-Pro-Asn (GPN)-loop; involved in dimer interface element. GTP is bound at residue 178-181 (SKMD).

This sequence belongs to the GPN-loop GTPase family. As to quaternary structure, heterodimers with GPN1 or GPN3. Binds to RNA polymerase II (RNAPII).

Functionally, small GTPase required for proper localization of RNA polymerase II and III (RNAPII and RNAPIII). May act at an RNAP assembly step prior to nuclear import. The polypeptide is GPN-loop GTPase 2 (Homo sapiens (Human)).